The chain runs to 165 residues: ATP synthase subunit b (165 aa).

The helical transmembrane segment at glycine 7–valine 27 threads the bilayer.

Belongs to the ATPase B chain family. F-type ATPases have 2 components, F(1) - the catalytic core - and F(0) - the membrane proton channel. F(1) has five subunits: alpha(3), beta(3), gamma(1), delta(1), epsilon(1). F(0) has three main subunits: a(1), b(2) and c(10-14). The alpha and beta chains form an alternating ring which encloses part of the gamma chain. F(1) is attached to F(0) by a central stalk formed by the gamma and epsilon chains, while a peripheral stalk is formed by the delta and b chains.

The protein localises to the cell membrane. Functionally, f(1)F(0) ATP synthase produces ATP from ADP in the presence of a proton or sodium gradient. F-type ATPases consist of two structural domains, F(1) containing the extramembraneous catalytic core and F(0) containing the membrane proton channel, linked together by a central stalk and a peripheral stalk. During catalysis, ATP synthesis in the catalytic domain of F(1) is coupled via a rotary mechanism of the central stalk subunits to proton translocation. Component of the F(0) channel, it forms part of the peripheral stalk, linking F(1) to F(0). The protein is ATP synthase subunit b of Streptococcus mutans serotype c (strain ATCC 700610 / UA159).